A 298-amino-acid chain; its full sequence is ATP synthase gamma chain (298 aa).

This sequence belongs to the ATPase gamma chain family. As to quaternary structure, F-type ATPases have 2 components, CF(1) - the catalytic core - and CF(0) - the membrane proton channel. CF(1) has five subunits: alpha(3), beta(3), gamma(1), delta(1), epsilon(1). CF(0) has three main subunits: a, b and c.

The protein resides in the cell membrane. Functionally, produces ATP from ADP in the presence of a proton gradient across the membrane. The gamma chain is believed to be important in regulating ATPase activity and the flow of protons through the CF(0) complex. The protein is ATP synthase gamma chain of Parafrankia sp. (strain EAN1pec).